A 307-amino-acid polypeptide reads, in one-letter code: Acetyl-coenzyme A carboxylase carboxyl transferase subunit beta (307 aa).

One can recognise a CoA carboxyltransferase N-terminal domain in the interval 28 to 297 (LWVKCPDTGQ…TPEPGTAPEP (270 aa)). The interval 286 to 307 (RRTPEPGTAPEPTTPEPLPNAA) is disordered. Pro residues predominate over residues 292-307 (GTAPEPTTPEPLPNAA).

This sequence belongs to the AccD/PCCB family. As to quaternary structure, acetyl-CoA carboxylase is a heterohexamer composed of biotin carboxyl carrier protein (AccB), biotin carboxylase (AccC) and two subunits each of ACCase subunit alpha (AccA) and ACCase subunit beta (AccD).

It localises to the cytoplasm. The catalysed reaction is N(6)-carboxybiotinyl-L-lysyl-[protein] + acetyl-CoA = N(6)-biotinyl-L-lysyl-[protein] + malonyl-CoA. Its pathway is lipid metabolism; malonyl-CoA biosynthesis; malonyl-CoA from acetyl-CoA: step 1/1. Its function is as follows. Component of the acetyl coenzyme A carboxylase (ACC) complex. Biotin carboxylase (BC) catalyzes the carboxylation of biotin on its carrier protein (BCCP) and then the CO(2) group is transferred by the transcarboxylase to acetyl-CoA to form malonyl-CoA. This is Acetyl-coenzyme A carboxylase carboxyl transferase subunit beta from Methylorubrum extorquens (strain ATCC 14718 / DSM 1338 / JCM 2805 / NCIMB 9133 / AM1) (Methylobacterium extorquens).